Here is a 155-residue protein sequence, read N- to C-terminus: Endoribonuclease YbeY (155 aa).

Residues histidine 114, histidine 118, and histidine 124 each contribute to the Zn(2+) site.

This sequence belongs to the endoribonuclease YbeY family. Requires Zn(2+) as cofactor.

It localises to the cytoplasm. Its function is as follows. Single strand-specific metallo-endoribonuclease involved in late-stage 70S ribosome quality control and in maturation of the 3' terminus of the 16S rRNA. The chain is Endoribonuclease YbeY from Escherichia coli O81 (strain ED1a).